The following is a 257-amino-acid chain: 5'-nucleotidase SurE (257 aa).

Asp13, Asp14, Ser44, and Asn100 together coordinate a divalent metal cation.

It belongs to the SurE nucleotidase family. Requires a divalent metal cation as cofactor.

Its subcellular location is the cytoplasm. The enzyme catalyses a ribonucleoside 5'-phosphate + H2O = a ribonucleoside + phosphate. Functionally, nucleotidase that shows phosphatase activity on nucleoside 5'-monophosphates. The polypeptide is 5'-nucleotidase SurE (Phocaeicola vulgatus (strain ATCC 8482 / DSM 1447 / JCM 5826 / CCUG 4940 / NBRC 14291 / NCTC 11154) (Bacteroides vulgatus)).